A 133-amino-acid chain; its full sequence is Aspartate 1-decarboxylase (133 aa).

The active-site Schiff-base intermediate with substrate; via pyruvic acid is the S26. Residue S26 is modified to Pyruvic acid (Ser). T58 serves as a coordination point for substrate. Y59 functions as the Proton donor in the catalytic mechanism. Position 74–76 (74–76 (GAA)) interacts with substrate.

The protein belongs to the PanD family. In terms of assembly, heterooctamer of four alpha and four beta subunits. Pyruvate is required as a cofactor. In terms of processing, is synthesized initially as an inactive proenzyme, which is activated by self-cleavage at a specific serine bond to produce a beta-subunit with a hydroxyl group at its C-terminus and an alpha-subunit with a pyruvoyl group at its N-terminus.

It localises to the cytoplasm. It carries out the reaction L-aspartate + H(+) = beta-alanine + CO2. The protein operates within cofactor biosynthesis; (R)-pantothenate biosynthesis; beta-alanine from L-aspartate: step 1/1. Its function is as follows. Catalyzes the pyruvoyl-dependent decarboxylation of aspartate to produce beta-alanine. This Legionella pneumophila (strain Paris) protein is Aspartate 1-decarboxylase.